The primary structure comprises 91 residues: Heat shock protein 30E (91 aa).

The disordered stretch occupies residues 62-91 (RDQIRQPGAPESEGTSPNTGKDGKDPGNSL). Basic and acidic residues predominate over residues 82–91 (KDGKDPGNSL).

Belongs to the small heat shock protein (HSP20) family.

The protein is Heat shock protein 30E (hsp30e) of Xenopus laevis (African clawed frog).